The following is a 436-amino-acid chain: Retinoic acid receptor RXR (436 aa).

The interval 1-108 (MDRSEGMDTL…GPSPSPGLPH (108 aa)) is disordered. The interval 1 to 116 (MDRSEGMDTL…PHSSLHTKHI (116 aa)) is modulating. Residues 13-22 (SMPSGMSMGM) are compositionally biased toward low complexity. Polar residues-rich tracts occupy residues 40 to 49 (SSLTSPTSTH) and 62 to 76 (MASS…QQMH). Positions 85–98 (SSMGSPPMLCLSPS) are enriched in low complexity. NR C4-type zinc fingers lie at residues 117–137 (CAIC…CEGC) and 153–172 (CRDD…CQYC). A DNA-binding region (nuclear receptor) is located at residues 117 to 182 (CAICGDRASG…RYMKCLSMGM (66 aa)). Residues 183 to 206 (KREAVQEERQRVKEKGDGEVESTS) are hinge. Basic and acidic residues predominate over residues 189–200 (EERQRVKEKGDG). Positions 189–209 (EERQRVKEKGDGEVESTSGAN) are disordered. An NR LBD domain is found at 209–432 (NNDMPVEQIL…TFLMEMLENP (224 aa)). Arg290 and Ala301 together coordinate 9-cis-retinoate.

This sequence belongs to the nuclear hormone receptor family. NR2 subfamily. Homodimer (via ligand-binding domain). Heterodimer. Homotetramer consisting of 2 canonical homodimers. Within the tetramer, each monomer binds one molecule of 9C-RA and a NCOA1-derived peptide containing an L-X(2)-L-L motif.

The protein resides in the nucleus. Functionally, ligand-dependent transcription factor probably involved in the retinoic acid response pathway. Binds 9-cis-retinoic acid (9C-RA) and, to a lesser extent, docosahexaenoic acid (DHA), phytanic acid, methoprene acid and oleic acid. Binds to double-stranded DNA sequences containing direct repeats (DR) with the consensus sequence 5'-[AG]GGTCA-3' and 1, 2, 3, 4 or 5 nucleotides in between (DR1, DR2, DR3. DR4 and DR5, respectively). Binding to DR1 is strongest. Transactivates gene expression when 9C-RA or DHA is bound. The protein is Retinoic acid receptor RXR of Biomphalaria glabrata (Bloodfluke planorb).